The primary structure comprises 124 residues: Small ribosomal subunit protein uS12 (124 aa).

Residues 1–28 (MPTIQQLIRSERSKAKKKTKSPALKQCP) are disordered. Asp89 is modified (3-methylthioaspartic acid). Positions 101–124 (TLDAQGVKDRKQGRSKYGTKKPKE) are disordered. Residues 113–124 (GRSKYGTKKPKE) are compositionally biased toward basic residues.

This sequence belongs to the universal ribosomal protein uS12 family. As to quaternary structure, part of the 30S ribosomal subunit. Contacts proteins S8 and S17. May interact with IF1 in the 30S initiation complex.

Functionally, with S4 and S5 plays an important role in translational accuracy. Its function is as follows. Interacts with and stabilizes bases of the 16S rRNA that are involved in tRNA selection in the A site and with the mRNA backbone. Located at the interface of the 30S and 50S subunits, it traverses the body of the 30S subunit contacting proteins on the other side and probably holding the rRNA structure together. The combined cluster of proteins S8, S12 and S17 appears to hold together the shoulder and platform of the 30S subunit. The sequence is that of Small ribosomal subunit protein uS12 from Crocosphaera subtropica (strain ATCC 51142 / BH68) (Cyanothece sp. (strain ATCC 51142)).